Reading from the N-terminus, the 713-residue chain is Polyribonucleotide nucleotidyltransferase (713 aa).

Residues D498 and D504 each contribute to the Mg(2+) site. The KH domain occupies 565–631 (PRILSLKVPV…RIEDLTREAK (67 aa)). The S1 motif domain occupies 633–701 (GEIYEGTVTR…ERGKIDLIRP (69 aa)).

The protein belongs to the polyribonucleotide nucleotidyltransferase family. Mg(2+) serves as cofactor.

It localises to the cytoplasm. It catalyses the reaction RNA(n+1) + phosphate = RNA(n) + a ribonucleoside 5'-diphosphate. Involved in mRNA degradation. Catalyzes the phosphorolysis of single-stranded polyribonucleotides processively in the 3'- to 5'-direction. The protein is Polyribonucleotide nucleotidyltransferase of Thermus thermophilus (strain ATCC 27634 / DSM 579 / HB8).